The chain runs to 97 residues: DNA-directed RNA polymerase subunit omega (97 aa).

It belongs to the RNA polymerase subunit omega family. As to quaternary structure, the RNAP catalytic core consists of 2 alpha, 1 beta, 1 beta' and 1 omega subunit. When a sigma factor is associated with the core the holoenzyme is formed, which can initiate transcription.

It carries out the reaction RNA(n) + a ribonucleoside 5'-triphosphate = RNA(n+1) + diphosphate. Promotes RNA polymerase assembly. Latches the N- and C-terminal regions of the beta' subunit thereby facilitating its interaction with the beta and alpha subunits. This Coxiella burnetii (strain Dugway 5J108-111) protein is DNA-directed RNA polymerase subunit omega.